The sequence spans 660 residues: Translation factor GUF1, mitochondrial (660 aa).

A mitochondrion-targeting transit peptide spans 1–42; sequence MRSCVRTASSVLQSWRAHTVLRNGCPLPSRTLERLPRLARSY. The 181-residue stretch at 62–242 folds into the tr-type G domain; it reads ERYRNFCIVA…AVVEKIPAPV (181 aa). GTP contacts are provided by residues 71-78, 135-139, and 189-192; these read AHVDHGKS, DTPGH, and NKVD.

The protein belongs to the TRAFAC class translation factor GTPase superfamily. Classic translation factor GTPase family. LepA subfamily.

It localises to the mitochondrion inner membrane. It catalyses the reaction GTP + H2O = GDP + phosphate + H(+). Functionally, promotes mitochondrial protein synthesis. May act as a fidelity factor of the translation reaction, by catalyzing a one-codon backward translocation of tRNAs on improperly translocated ribosomes. Binds to mitochondrial ribosomes in a GTP-dependent manner. This Phaeosphaeria nodorum (strain SN15 / ATCC MYA-4574 / FGSC 10173) (Glume blotch fungus) protein is Translation factor GUF1, mitochondrial.